A 445-amino-acid polypeptide reads, in one-letter code: POU domain, class 3, transcription factor 2 (445 aa).

Disordered stretches follow at residues 64-173 and 203-269; these read ALSH…WRSA and LGAG…TPTS. Residues 67-90 are compositionally biased toward gly residues; sequence HGGGGGGGGGGGGGGGGGGGGGDG. 2 stretches are compositionally biased toward low complexity: residues 125-151 and 163-173; these read QQQH…QQQQ and HHPGPGAWRSA. Over residues 217–226 the composition is skewed to basic and acidic residues; sequence LRDAHDEPHH. Positions 227-237 are enriched in basic residues; sequence ADHHPHPHSHP. Positions 239–253 are enriched in pro residues; it reads QQPPPPPPPQGPPGH. Positions 264–338 constitute a POU-specific domain; the sequence is EDTPTSDDLE…LLNKWLEEAD (75 aa). Phosphoserine is present on Ser-343. A DNA-binding region (homeobox) is located at residues 356 to 415; that stretch reads KRKKRTSIEVSVKGALESHFLKCPKPSAQEITSLADSLQLEKEVVRVWFCNRRQKEKRMT. The interval 411 to 445 is disordered; sequence EKRMTPPGGTLPGAEDVYGGSRDTPPHHGVQTPVQ.

The protein belongs to the POU transcription factor family. Class-3 subfamily. As to quaternary structure, interacts with PQBP1. Interaction with ISL1. As to expression, expressed specifically in the neuroectodermal cell lineage.

Its subcellular location is the nucleus. In terms of biological role, transcription factor that plays a key role in neuronal differentiation. Binds preferentially to the recognition sequence which consists of two distinct half-sites, ('GCAT') and ('TAAT'), separated by a non-conserved spacer region of 0, 2, or 3 nucleotides. Acts as a transcriptional activator when binding cooperatively with SOX4, SOX11, or SOX12 to gene promoters. The combination of three transcription factors, ASCL1, POU3F2/BRN2 and MYT1L, is sufficient to reprogram fibroblasts and other somatic cells into induced neuronal (iN) cells in vitro. Acts downstream of ASCL1, accessing chromatin that has been opened by ASCL1, and promotes transcription of neuronal genes. This Mus musculus (Mouse) protein is POU domain, class 3, transcription factor 2 (Pou3f2).